Consider the following 307-residue polypeptide: MADHLYARKNDALNVNPDIVNGQRSDINITVRGSDWYWAVCAVMTVSTFAFLGLGMRKPRTDRIFHYITAGITMIASIAYFTMASNLGWTPIAVEFQRSNHRVAGIYREIFYARYIDWFLTTPLLLTDLLLTAGMPWPTVLWVILVDWVMIVTGLVGALVKSSYKWGYFAFGCAALAYIVYVLAWEARLHAKHVGPDVGRTFVMCGSLTAVVWILYPIAWGVCEGGNLIAPDSEAVFYGILDLIAKPVFGALLLWGHRNIDPARLGLRIRDIDERIFPDGPNNKVASGHGARNDTATASGSNVNPNA.

Residue Asn28 is glycosylated (N-linked (GlcNAc...) asparagine). 7 consecutive transmembrane segments (helical) span residues Trp36–Met56, Ile64–Ala84, Trp118–Pro138, Val140–Val160, Trp166–Glu186, Phe202–Val222, and Ala235–Trp255. The segment at Gly280 to Ala307 is disordered. N-linked (GlcNAc...) asparagine glycosylation is present at Asn293. Residues Asp294–Ala307 show a composition bias toward polar residues.

Belongs to the archaeal/bacterial/fungal opsin family.

Its subcellular location is the membrane. In terms of biological role, opsin-like protein; part of the car gene cluster that mediates the biosynthesis of neurosporaxanthin, a carboxylic apocarotenoid acting as an essential protective pigment and leading to orange pigmentation. The exact role of carO in carotenoid biosynthesis is not known yet, but it could be involved in the regulation of the pathway by light or other stimuli. This is Opsin-like protein carO from Fusarium fujikuroi (Bakanae and foot rot disease fungus).